A 288-amino-acid chain; its full sequence is Aquaporin NIP2-1 (288 aa).

Methionine 1 is modified (N-acetylmethionine). 2 consecutive transmembrane segments (helical) span residues 50 to 70 and 77 to 97; these read LLAELVGTYYLIFAGCAAIAV and VVTLVGIAVVWGIVIMVLVYC. An NPA 1 motif is present at residues 106–108; the sequence is NPA. 3 helical membrane passes run 126-146, 170-190, and 202-222; these read AYITVQVIGSTLASATLRLLF, LQAFVMEFIITGFLMLVVCAV, and GLIIGATVTLNVIFAGEVSGA. Positions 225 to 227 match the NPA 2 motif; that stretch reads NPA. A helical membrane pass occupies residues 234–254; that stretch reads LVWGCYKGIWIYLLAPTLGAV. Position 278 is a phosphoserine (serine 278).

Belongs to the MIP/aquaporin (TC 1.A.8) family. NIP (TC 1.A.8.12) subfamily. In terms of tissue distribution, specifically expressed in roots with high expression in root elongation zone and root stele.

It is found in the endoplasmic reticulum membrane. Low water transport activity in yeast cells. In Arabidopsis thaliana (Mouse-ear cress), this protein is Aquaporin NIP2-1 (NIP2-1).